Consider the following 152-residue polypeptide: Transcriptional repressor NrdR (152 aa).

The segment at Cys3–Cys34 is a zinc-finger region. The region spanning Ile49–Lys139 is the ATP-cone domain.

This sequence belongs to the NrdR family. Zn(2+) is required as a cofactor.

Negatively regulates transcription of bacterial ribonucleotide reductase nrd genes and operons by binding to NrdR-boxes. The polypeptide is Transcriptional repressor NrdR (Roseiflexus sp. (strain RS-1)).